A 179-amino-acid polypeptide reads, in one-letter code: Large ribosomal subunit protein uL5 (179 aa).

It belongs to the universal ribosomal protein uL5 family. As to quaternary structure, part of the 50S ribosomal subunit; part of the 5S rRNA/L5/L18/L25 subcomplex. Contacts the 5S rRNA and the P site tRNA. Forms a bridge to the 30S subunit in the 70S ribosome.

Its function is as follows. This is one of the proteins that bind and probably mediate the attachment of the 5S RNA into the large ribosomal subunit, where it forms part of the central protuberance. In the 70S ribosome it contacts protein S13 of the 30S subunit (bridge B1b), connecting the 2 subunits; this bridge is implicated in subunit movement. Contacts the P site tRNA; the 5S rRNA and some of its associated proteins might help stabilize positioning of ribosome-bound tRNAs. The chain is Large ribosomal subunit protein uL5 from Neisseria meningitidis serogroup C (strain 053442).